Consider the following 34-residue polypeptide: Photosystem II reaction center protein M (34 aa).

The helical transmembrane segment at 5 to 25 (ILAFIATALFILIPTAFLLIL) threads the bilayer.

This sequence belongs to the PsbM family. In terms of assembly, PSII is composed of 1 copy each of membrane proteins PsbA, PsbB, PsbC, PsbD, PsbE, PsbF, PsbH, PsbI, PsbJ, PsbK, PsbL, PsbM, PsbT, PsbX, PsbY, PsbZ, Psb30/Ycf12, at least 3 peripheral proteins of the oxygen-evolving complex and a large number of cofactors. It forms dimeric complexes.

Its subcellular location is the plastid. It localises to the chloroplast thylakoid membrane. Functionally, one of the components of the core complex of photosystem II (PSII). PSII is a light-driven water:plastoquinone oxidoreductase that uses light energy to abstract electrons from H(2)O, generating O(2) and a proton gradient subsequently used for ATP formation. It consists of a core antenna complex that captures photons, and an electron transfer chain that converts photonic excitation into a charge separation. This subunit is found at the monomer-monomer interface. The polypeptide is Photosystem II reaction center protein M (Angiopteris evecta (Mule's foot fern)).